The following is a 414-amino-acid chain: Glucose-1-phosphate adenylyltransferase (414 aa).

Alpha-D-glucose 1-phosphate contacts are provided by residues Y99, G164, 181–182 (EK), and S199.

Belongs to the bacterial/plant glucose-1-phosphate adenylyltransferase family. In terms of assembly, homotetramer.

It carries out the reaction alpha-D-glucose 1-phosphate + ATP + H(+) = ADP-alpha-D-glucose + diphosphate. The protein operates within glycan biosynthesis; glycogen biosynthesis. Its function is as follows. Involved in the biosynthesis of ADP-glucose, a building block required for the elongation reactions to produce glycogen. Catalyzes the reaction between ATP and alpha-D-glucose 1-phosphate (G1P) to produce pyrophosphate and ADP-Glc. In Bifidobacterium longum (strain DJO10A), this protein is Glucose-1-phosphate adenylyltransferase.